Consider the following 170-residue polypeptide: Large ribosomal subunit protein uL10 (170 aa).

It belongs to the universal ribosomal protein uL10 family. As to quaternary structure, part of the ribosomal stalk of the 50S ribosomal subunit. The N-terminus interacts with L11 and the large rRNA to form the base of the stalk. The C-terminus forms an elongated spine to which L12 dimers bind in a sequential fashion forming a multimeric L10(L12)X complex.

In terms of biological role, forms part of the ribosomal stalk, playing a central role in the interaction of the ribosome with GTP-bound translation factors. The protein is Large ribosomal subunit protein uL10 of Lactobacillus helveticus (strain DPC 4571).